The primary structure comprises 358 residues: Aurora kinase (358 aa).

The segment at 1–49 (MENKATLARNIGEKRVSPRSKVNGTGKSWRISYSPQRMDGVSSGRNVSK) is disordered. Positions 20–35 (SKVNGTGKSWRISYSP) are enriched in polar residues. A Protein kinase domain is found at 100-358 (FEVGRKLGKG…PWILKNKPFW (259 aa)). ATP is bound by residues 106 to 114 (LGKGKFGKV) and lysine 129. Aspartate 223 acts as the Proton acceptor in catalysis.

Belongs to the protein kinase superfamily. Ser/Thr protein kinase family. Aurora subfamily.

It localises to the nucleus. The protein resides in the cytoplasm. The protein localises to the cytoskeleton. It is found in the spindle. Its subcellular location is the chromosome. It localises to the centromere. The protein resides in the kinetochore. The enzyme catalyses L-seryl-[protein] + ATP = O-phospho-L-seryl-[protein] + ADP + H(+). It catalyses the reaction L-threonyl-[protein] + ATP = O-phospho-L-threonyl-[protein] + ADP + H(+). Its function is as follows. Component of the chromosomal passenger complex (CPC), a complex that acts as a key regulator of chromosome segregation and cytokinesis. Has a role in error-correction of aberrent kinetochore-microtubule attachments to ensure that sister kinetochores become bioriented and connect to opposite poles by promoting spindle assembly checkpoint signaling. The chain is Aurora kinase (IPL1) from Candida glabrata (strain ATCC 2001 / BCRC 20586 / JCM 3761 / NBRC 0622 / NRRL Y-65 / CBS 138) (Yeast).